Here is a 126-residue protein sequence, read N- to C-terminus: Histone H2B type 3-B (126 aa).

The segment covering M1–K12 has biased composition (low complexity). Residues M1–K35 are disordered. Residue P2 is modified to N-acetylproline. Residue K6 is modified to N6-(2-hydroxyisobutyryl)lysine; alternate. The residue at position 6 (K6) is an N6-(beta-hydroxybutyryl)lysine; alternate. K6 bears the N6-acetyllysine; alternate mark. Position 6 is an N6-butyryllysine; alternate (K6). An N6-crotonyllysine; alternate modification is found at K6. An N6-lactoyllysine; alternate modification is found at K6. K6 participates in a covalent cross-link: Glycyl lysine isopeptide (Lys-Gly) (interchain with G-Cter in SUMO2); alternate. S7 bears the ADP-ribosylserine mark. K12 carries the N6-(beta-hydroxybutyryl)lysine; alternate modification. 2 positions are modified to N6-acetyllysine; alternate: K12 and K13. An N6-crotonyllysine; alternate mark is found at K12 and K13. K12 is modified (N6-lactoyllysine; alternate). The residue at position 13 (K13) is an N6-(2-hydroxyisobutyryl)lysine; alternate. S15 is modified (phosphoserine; by STK4/MST1). 4 positions are modified to N6-acetyllysine; alternate: K16, K17, K21, and K24. K16, K17, K21, and K24 each carry N6-crotonyllysine; alternate. An N6-lactoyllysine; alternate mark is found at K16, K17, K21, and K24. N6-(beta-hydroxybutyryl)lysine; alternate occurs at positions 17 and 21. Position 17 is an N6-glutaryllysine; alternate (K17). N6-(2-hydroxyisobutyryl)lysine; alternate is present on residues K21 and K24. The residue at position 21 (K21) is an N6-butyryllysine; alternate. A Glycyl lysine isopeptide (Lys-Gly) (interchain with G-Cter in SUMO2); alternate cross-link involves residue K21. K25 is subject to N6-(2-hydroxyisobutyryl)lysine. Residue K35 is modified to N6-(2-hydroxyisobutyryl)lysine; alternate. K35 bears the N6-(beta-hydroxybutyryl)lysine; alternate mark. The residue at position 35 (K35) is an N6-crotonyllysine; alternate. N6-glutaryllysine; alternate is present on K35. K35 carries the post-translational modification N6-succinyllysine; alternate. K35 is covalently cross-linked (Glycyl lysine isopeptide (Lys-Gly) (interchain with G-Cter in ubiquitin); alternate). Residue E36 is modified to PolyADP-ribosyl glutamic acid. A Phosphoserine; by AMPK modification is found at S37. N6-(2-hydroxyisobutyryl)lysine; alternate is present on residues K44, K47, and K58. K44 bears the N6-lactoyllysine; alternate mark. N6-glutaryllysine; alternate occurs at positions 44 and 47. Residue K47 is modified to N6-methyllysine; alternate. K58 bears the N6,N6-dimethyllysine; alternate mark. R80 is modified (dimethylated arginine). K86 is modified (N6-(2-hydroxyisobutyryl)lysine; alternate). K86 carries the post-translational modification N6-(beta-hydroxybutyryl)lysine; alternate. K86 is modified (N6-acetyllysine; alternate). The residue at position 86 (K86) is an N6-lactoyllysine; alternate. K86 is modified (N6,N6,N6-trimethyllysine; alternate). R87 and R93 each carry omega-N-methylarginine. N6-(2-hydroxyisobutyryl)lysine; alternate is present on K109. The residue at position 109 (K109) is an N6-lactoyllysine; alternate. K109 bears the N6-glutaryllysine; alternate mark. K109 bears the N6-methyllysine; alternate mark. A glycan (O-linked (GlcNAc) serine) is linked at S113. The residue at position 116 (T116) is a Phosphothreonine. N6-(2-hydroxyisobutyryl)lysine; alternate is present on residues K117 and K121. N6-(beta-hydroxybutyryl)lysine; alternate occurs at positions 117 and 121. An N6-lactoyllysine; alternate mark is found at K117 and K121. N6-glutaryllysine; alternate is present on residues K117 and K121. An N6-succinyllysine; alternate mark is found at K117 and K121. At K117 the chain carries N6-malonyllysine; alternate. K117 carries the post-translational modification N6-methylated lysine; alternate. K121 is covalently cross-linked (Glycyl lysine isopeptide (Lys-Gly) (interchain with G-Cter in ubiquitin); alternate).

This sequence belongs to the histone H2B family. As to quaternary structure, the nucleosome is a histone octamer containing two molecules each of H2A, H2B, H3 and H4 assembled in one H3-H4 heterotetramer and two H2A-H2B heterodimers. The octamer wraps approximately 147 bp of DNA. Post-translationally, monoubiquitination at Lys-35 (H2BK34Ub) by the MSL1/MSL2 dimer is required for histone H3 'Lys-4' (H3K4me) and 'Lys-79' (H3K79me) methylation and transcription activation at specific gene loci, such as HOXA9 and MEIS1 loci. Similarly, monoubiquitination at Lys-121 (H2BK120Ub) by the RNF20/40 complex gives a specific tag for epigenetic transcriptional activation and is also prerequisite for histone H3 'Lys-4' and 'Lys-79' methylation. It also functions cooperatively with the FACT dimer to stimulate elongation by RNA polymerase II. H2BK120Ub also acts as a regulator of mRNA splicing: deubiquitination by USP49 is required for efficient cotranscriptional splicing of a large set of exons. In terms of processing, phosphorylation at Ser-37 (H2BS36ph) by AMPK in response to stress promotes transcription. Phosphorylated on Ser-15 (H2BS14ph) by STK4/MST1 during apoptosis; which facilitates apoptotic chromatin condensation. Also phosphorylated on Ser-15 in response to DNA double strand breaks (DSBs), and in correlation with somatic hypermutation and immunoglobulin class-switch recombination. GlcNAcylation at Ser-113 promotes monoubiquitination of Lys-121. It fluctuates in response to extracellular glucose, and associates with transcribed genes. Post-translationally, ADP-ribosylated by PARP1 or PARP2 on Ser-7 (H2BS6ADPr) in response to DNA damage. H2BS6ADPr promotes recruitment of CHD1L. Poly ADP-ribosylation on Glu-36 (H2BE35ADPr) by PARP1 regulates adipogenesis: it inhibits phosphorylation at Ser-37 (H2BS36ph), thereby blocking expression of pro-adipogenetic genes. In terms of processing, crotonylation (Kcr) is specifically present in male germ cells and marks testis-specific genes in post-meiotic cells, including X-linked genes that escape sex chromosome inactivation in haploid cells. Crotonylation marks active promoters and enhancers and confers resistance to transcriptional repressors. It is also associated with post-meiotically activated genes on autosomes. Lactylated in macrophages by EP300/P300 by using lactoyl-CoA directly derived from endogenous or exogenous lactate, leading to stimulates gene transcription.

The protein resides in the nucleus. It localises to the chromosome. In terms of biological role, core component of nucleosome. Nucleosomes wrap and compact DNA into chromatin, limiting DNA accessibility to the cellular machineries which require DNA as a template. Histones thereby play a central role in transcription regulation, DNA repair, DNA replication and chromosomal stability. DNA accessibility is regulated via a complex set of post-translational modifications of histones, also called histone code, and nucleosome remodeling. The chain is Histone H2B type 3-B from Homo sapiens (Human).